Reading from the N-terminus, the 231-residue chain is Cutinase 2 (231 aa).

The N-terminal stretch at 1 to 16 (MKFFALTTLLAATASA) is a signal peptide. Cysteines 48 and 126 form a disulfide. Ser137 functions as the Nucleophile in the catalytic mechanism. A disulfide bond links Cys188 and Cys195. Asp192 is an active-site residue. His205 acts as the Proton donor/acceptor in catalysis.

Belongs to the cutinase family. In terms of processing, the 2 disulfide bonds play a critical role in holding the catalytic residues in juxta-position; reduction of the disulfide bridges results in the complete inactivation of the enzyme.

It localises to the secreted. It carries out the reaction cutin + H2O = cutin monomers.. Its function is as follows. Catalyzes the hydrolysis of complex carboxylic polyesters found in the cell wall of plants. Degrades cutin, a macromolecule that forms the structure of the plant cuticle. Allows pathogenic fungi to penetrate through the cuticular barrier into the host plant during the initial stage of fungal infection. In Fusarium vanettenii (Neocosmospora pisi), this protein is Cutinase 2 (CUT2).